A 65-amino-acid chain; its full sequence is Beta-mammal toxin Tma1 (65 aa).

One can recognise an LCN-type CS-alpha/beta domain in the interval 2-64 (KEGYLVGNDG…TWNSAKNRCG (63 aa)). 4 disulfide bridges follow: Cys-12/Cys-63, Cys-16/Cys-38, Cys-24/Cys-44, and Cys-28/Cys-46.

It belongs to the long (4 C-C) scorpion toxin superfamily. Sodium channel inhibitor family. Expressed by the venom gland.

The protein resides in the secreted. Functionally, beta toxins bind voltage-independently at site-4 of sodium channels (Nav) and shift the voltage of activation toward more negative potentials thereby affecting sodium channel activation and promoting spontaneous and repetitive firing. This toxin acts on human Nav1.4/SCN4A and Nav1.6/SCN8A voltage-gated sodium channels. The sequence is that of Beta-mammal toxin Tma1 from Tityus macrochirus (Scorpion).